The sequence spans 147 residues: Ribosome maturation factor RimP (147 aa).

It belongs to the RimP family.

Its subcellular location is the cytoplasm. In terms of biological role, required for maturation of 30S ribosomal subunits. In Legionella pneumophila (strain Paris), this protein is Ribosome maturation factor RimP.